A 423-amino-acid chain; its full sequence is Histidine--tRNA ligase (423 aa).

The protein belongs to the class-II aminoacyl-tRNA synthetase family. As to quaternary structure, homodimer.

The protein localises to the cytoplasm. It catalyses the reaction tRNA(His) + L-histidine + ATP = L-histidyl-tRNA(His) + AMP + diphosphate + H(+). This Rhodococcus erythropolis (strain PR4 / NBRC 100887) protein is Histidine--tRNA ligase.